The following is a 290-amino-acid chain: O-methyltransferase agiB (290 aa).

An S-adenosyl-L-methionine-binding site is contributed by Asp155. The active-site Proton acceptor is His194.

The protein belongs to the class I-like SAM-binding methyltransferase superfamily. Cation-independent O-methyltransferase family.

The protein operates within secondary metabolite biosynthesis. Its function is as follows. O-methyltransferase; part of the gene cluster that mediates the biosynthesis of the aspergillicins A and F, 2 cryptic cyclic hexa-depsipeptides. The hexamodular NRPS agiA catalyzes the condensation of the six amino acid residues including N-Me-L-O-Me-tyrosine, L-proline 1, L-proline 2, D-isoleucine, O-acetyl-threonine, and L-isoleucine. The starting condensation domain (C1) of agiA probably loads acetyl-CoA which is condensed on the N-terminus of threonine by the first module to yield O-acetyl-threonine. The second module then loads L-isoleucine. The epimerase (E) domain on module 2 is probably involved in the formation of the D-isoleucine moiety. Modules 3 and 4 further load 2 successive L-prolines. Module 5 is then involved in the condensation of O-Me-L-tyrosine produced by the O-methyltransferase agiB and the N-methyl transferase (NMeT) domain on module 5 probably catalyzes the N-methylation to yield the N-Me-L-O-Me-tyrosine moiety. The A domain of module 5 loads preferentially O-Me-L-tyrosine, but it can also accept L-phenylalanine, which leads to the production of aspergillicin G. Module 6 then loads the last residue, L-isoleucine. The C-terminal thiolesterase (TE) domain probably cyclizes the peptide using the hydroxy group from threonine to form the cyclic depsipeptide. This is O-methyltransferase agiB from Aspergillus flavus (strain ATCC 200026 / FGSC A1120 / IAM 13836 / NRRL 3357 / JCM 12722 / SRRC 167).